Here is a 186-residue protein sequence, read N- to C-terminus: Transposon Tn501 resolvase (186 aa).

Positions 4 to 137 (HRIGYVRVSS…EGITLAKQRG (134 aa)) constitute a Resolvase/invertase-type recombinase catalytic domain. Ser12 (O-(5'-phospho-DNA)-serine intermediate) is an active-site residue. A disordered region spans residues 17-38 (NPERQLEQTQVSKVFTDKASGK). The segment at residues 164-183 (KAQLAREFNISRETLYQYLR) is a DNA-binding region (H-T-H motif).

Belongs to the site-specific recombinase resolvase family.

Functionally, resolvase catalyzes the resolution (a site-specific recombination) of the cointegrated replicon to yield the final transposition products. This chain is Transposon Tn501 resolvase (tnpR), found in Pseudomonas aeruginosa.